We begin with the raw amino-acid sequence, 433 residues long: GPI mannosyltransferase 2 (433 aa).

9 helical membrane passes run 4 to 24 (LVKP…IISL), 109 to 129 (TAVI…FYLT), 148 to 165 (ATFT…GFFT), 172 to 194 (LSFL…IIPY), 204 to 226 (FYYT…NCIL), 247 to 267 (ALLF…RQQF), 322 to 342 (IPNF…TFYF), 354 to 374 (LIFI…VQII), and 410 to 430 (GYIY…VFFL).

It belongs to the PIGV family.

The protein resides in the endoplasmic reticulum membrane. It participates in glycolipid biosynthesis; glycosylphosphatidylinositol-anchor biosynthesis. Its function is as follows. Mannosyltransferase involved in glycosylphosphatidylinositol-anchor biosynthesis. Transfers the second mannose to the glycosylphosphatidylinositol during GPI precursor assembly. The sequence is that of GPI mannosyltransferase 2 (GPI18) from Candida glabrata (strain ATCC 2001 / BCRC 20586 / JCM 3761 / NBRC 0622 / NRRL Y-65 / CBS 138) (Yeast).